The following is a 189-amino-acid chain: uncharacterized protein (189 aa).

The 61-residue stretch at Arg2–Arg62 folds into the HTH tetR-type domain. The H-T-H motif DNA-binding region spans Thr25–Phe44.

This is an uncharacterized protein from Bacillus subtilis (strain 168).